A 364-amino-acid polypeptide reads, in one-letter code: Aminomethyltransferase (364 aa).

The protein belongs to the GcvT family. In terms of assembly, the glycine cleavage system is composed of four proteins: P, T, L and H.

It catalyses the reaction N(6)-[(R)-S(8)-aminomethyldihydrolipoyl]-L-lysyl-[protein] + (6S)-5,6,7,8-tetrahydrofolate = N(6)-[(R)-dihydrolipoyl]-L-lysyl-[protein] + (6R)-5,10-methylene-5,6,7,8-tetrahydrofolate + NH4(+). Its function is as follows. The glycine cleavage system catalyzes the degradation of glycine. This chain is Aminomethyltransferase, found in Shewanella halifaxensis (strain HAW-EB4).